A 309-amino-acid chain; its full sequence is Porphobilinogen deaminase (309 aa).

Cys241 bears the S-(dipyrrolylmethanemethyl)cysteine mark.

The protein belongs to the HMBS family. Monomer. It depends on dipyrromethane as a cofactor.

It catalyses the reaction 4 porphobilinogen + H2O = hydroxymethylbilane + 4 NH4(+). It functions in the pathway porphyrin-containing compound metabolism; protoporphyrin-IX biosynthesis; coproporphyrinogen-III from 5-aminolevulinate: step 2/4. In terms of biological role, tetrapolymerization of the monopyrrole PBG into the hydroxymethylbilane pre-uroporphyrinogen in several discrete steps. In Bacillus cereus (strain B4264), this protein is Porphobilinogen deaminase.